The chain runs to 214 residues: MMNQMGMHMQQPGVVPGGPGGPVGMAGGPVGGVGVSPVMMQSPQMQQQQQVAAQQQQQQQQQQQAQAHQQQSQQTEKVDNISKVKGLVGPLRDSLSTTVKTAAQLLQQNNLNDAGTKGGDMSTTTPRFDKHLEEFYSICDQIELNLKTAKLCMQQGASSQQYLPIPVAPTQPNPAETNALSYSQYLDVVKIQIGYAKDIHDTLICAAQNICPSE.

The interval 1–78 (MMNQMGMHMQ…QQQSQQTEKV (78 aa)) is disordered. Residues 15–34 (VPGGPGGPVGMAGGPVGGVG) are compositionally biased toward gly residues. The span at 44–74 (QMQQQQQVAAQQQQQQQQQQQAQAHQQQSQQ) shows a compositional bias: low complexity.

The protein belongs to the Mediator complex subunit 29 family. As to quaternary structure, component of the Mediator complex.

The protein resides in the nucleus. Component of the Mediator complex, a coactivator involved in the regulated transcription of nearly all RNA polymerase II-dependent genes. Mediator functions as a bridge to convey information from gene-specific regulatory proteins to the basal RNA polymerase II transcription machinery. Mediator is recruited to promoters by direct interactions with regulatory proteins and serves as a scaffold for the assembly of a functional preinitiation complex with RNA polymerase II and the general transcription factors. The polypeptide is Mediator of RNA polymerase II transcription subunit 29 (ix) (Aedes aegypti (Yellowfever mosquito)).